The following is an 89-amino-acid chain: Transcriptional regulator WhiB2 (89 aa).

A compositionally biased stretch (pro residues) spans M1–P15. The tract at residues M1–R24 is disordered. The 4Fe-4S Wbl-type domain occupies L26–R83. Residue C27 participates in [4Fe-4S] cluster binding. S42 carries the phosphoserine modification. Residues C50, C53, and C59 each contribute to the [4Fe-4S] cluster site.

This sequence belongs to the WhiB family. It depends on [4Fe-4S] cluster as a cofactor. In terms of processing, may be phosphorylated, possibly on Ser-42. The cluster is degraded quickly in the presence of air. Upon cluster removal intramolecular disulfide bonds are formed. Post-translationally, the Fe-S cluster can be nitrosylated by nitric oxide (NO).

It localises to the cytoplasm. In terms of biological role, acts as a transcriptional regulator. Probably redox-responsive. The apo- but not holo-form probably binds DNA. Its function is as follows. The apo-form functions as a chaperone, preventing aggregation or helping in correct refolding of a number of substrates; this activity does not require ATP or the ability to bind a Fe-S cluster. Chaperone activity is insensitive to the redox state of its cysteine residues. The apo-form has no protein disulfide reductase activity. The apo-form binds to its own promoter. The polypeptide is Transcriptional regulator WhiB2 (whiB2) (Mycobacterium tuberculosis (strain ATCC 25618 / H37Rv)).